Reading from the N-terminus, the 2183-residue chain is DNA polymerase epsilon catalytic subunit A (2183 aa).

Zn(2+) is bound by residues cysteine 2066, cysteine 2069, cysteine 2090, and cysteine 2093. A CysA-type zinc finger spans residues 2066 to 2093 (CFKCKNPCDLDLCKDSCCTKSGFRCPLC). [4Fe-4S] cluster is bound by residues cysteine 2124, cysteine 2127, cysteine 2139, and cysteine 2141. A CysB motif motif is present at residues 2124-2141 (CDKCRRVKEYELTEFCPC).

This sequence belongs to the DNA polymerase type-B family. Heterotetramer. Consists of 4 subunits: POL2, DPB2, DPB3 and DPB4. [4Fe-4S] cluster serves as cofactor.

It is found in the nucleus. The catalysed reaction is DNA(n) + a 2'-deoxyribonucleoside 5'-triphosphate = DNA(n+1) + diphosphate. In terms of biological role, DNA polymerase II participates in chromosomal DNA replication. The protein is DNA polymerase epsilon catalytic subunit A (POL2) of Yarrowia lipolytica (strain CLIB 122 / E 150) (Yeast).